We begin with the raw amino-acid sequence, 316 residues long: GTPase Era (316 aa).

The Era-type G domain occupies 9 to 190 (RAGFAAIIGA…TAKLVSMMPE (182 aa)). A G1 region spans residues 17 to 24 (GAPNAGKS). 17 to 24 (GAPNAGKS) contacts GTP. A G2 region spans residues 43-47 (QTTRF). The G3 stretch occupies residues 64–67 (DTPG). Residues 64–68 (DTPGI) and 140–143 (NKID) each bind GTP. The segment at 140 to 143 (NKID) is G4. The G5 stretch occupies residues 169–171 (ISA). A KH type-2 domain is found at 221-298 (VHEELPYAAT…HLFLHVKVKE (78 aa)).

It belongs to the TRAFAC class TrmE-Era-EngA-EngB-Septin-like GTPase superfamily. Era GTPase family. As to quaternary structure, monomer.

It is found in the cytoplasm. The protein localises to the cell inner membrane. Its function is as follows. An essential GTPase that binds both GDP and GTP, with rapid nucleotide exchange. Plays a role in 16S rRNA processing and 30S ribosomal subunit biogenesis and possibly also in cell cycle regulation and energy metabolism. This Caulobacter vibrioides (strain ATCC 19089 / CIP 103742 / CB 15) (Caulobacter crescentus) protein is GTPase Era.